We begin with the raw amino-acid sequence, 223 residues long: Ribonuclease 3 (223 aa).

The RNase III domain maps to 3 to 125; the sequence is LEKLQKKLGH…LIAAIYLDAG (123 aa). Mg(2+) is bound at residue glutamate 38. Aspartate 42 is a catalytic residue. Mg(2+)-binding residues include aspartate 111 and glutamate 114. Glutamate 114 is a catalytic residue. The DRBM domain occupies 152 to 222; it reads DPKTRLQEFL…AQQAIEKLKI (71 aa).

Belongs to the ribonuclease III family. In terms of assembly, homodimer. The cofactor is Mg(2+).

The protein localises to the cytoplasm. The enzyme catalyses Endonucleolytic cleavage to 5'-phosphomonoester.. Digests double-stranded RNA. Involved in the processing of primary rRNA transcript to yield the immediate precursors to the large and small rRNAs (23S and 16S). Processes some mRNAs, and tRNAs when they are encoded in the rRNA operon. Processes pre-crRNA and tracrRNA of type II CRISPR loci if present in the organism. This is Ribonuclease 3 from Histophilus somni (strain 2336) (Haemophilus somnus).